We begin with the raw amino-acid sequence, 162 residues long: MDNLNINFINDDEHPIPSQDLLLKCLQLVADKHHISHAEVNLNIVSNDEIQQINKQFRNKDKPTNIISFEFEKPQGLPDDIANDFLGDIVIAPAVLENEAKEQNKELNDHWQHIFIHGLLHLLGYDHQGDQEAEVMENLEIQLLAQLGIANPYIEQEDQNGR.

Residues His-117, His-121, and His-127 each coordinate Zn(2+).

It belongs to the endoribonuclease YbeY family. The cofactor is Zn(2+).

Its subcellular location is the cytoplasm. Functionally, single strand-specific metallo-endoribonuclease involved in late-stage 70S ribosome quality control and in maturation of the 3' terminus of the 16S rRNA. The chain is Endoribonuclease YbeY from Francisella tularensis subsp. mediasiatica (strain FSC147).